We begin with the raw amino-acid sequence, 124 residues long: Small ribosomal subunit protein uS12 (124 aa).

Asp-89 is subject to 3-methylthioaspartic acid. The tract at residues 102–124 (LDTSGVNNRKHGRSKYGTKRPKS) is disordered. The segment covering 109–124 (NRKHGRSKYGTKRPKS) has biased composition (basic residues).

This sequence belongs to the universal ribosomal protein uS12 family. Part of the 30S ribosomal subunit. Contacts proteins S8 and S17. May interact with IF1 in the 30S initiation complex.

With S4 and S5 plays an important role in translational accuracy. Its function is as follows. Interacts with and stabilizes bases of the 16S rRNA that are involved in tRNA selection in the A site and with the mRNA backbone. Located at the interface of the 30S and 50S subunits, it traverses the body of the 30S subunit contacting proteins on the other side and probably holding the rRNA structure together. The combined cluster of proteins S8, S12 and S17 appears to hold together the shoulder and platform of the 30S subunit. This is Small ribosomal subunit protein uS12 from Francisella tularensis subsp. novicida (strain U112).